Consider the following 419-residue polypeptide: L-rhamnose isomerase (419 aa).

Residues H262, D294, and D296 each contribute to the Mn(2+) site.

Belongs to the rhamnose isomerase family. As to quaternary structure, homotetramer. It depends on Mn(2+) as a cofactor.

Its subcellular location is the cytoplasm. It catalyses the reaction L-rhamnopyranose = L-rhamnulose. It participates in carbohydrate degradation; L-rhamnose degradation; glycerone phosphate from L-rhamnose: step 1/3. In terms of biological role, catalyzes the interconversion of L-rhamnose and L-rhamnulose. The protein is L-rhamnose isomerase of Citrobacter koseri (strain ATCC BAA-895 / CDC 4225-83 / SGSC4696).